The chain runs to 1031 residues: uncharacterized protein (1031 aa).

An SWIM-type zinc finger spans residues 50–85; the sequence is FKVQINLKTAAAHLDCSCSNDKQNCVHIIAALLKYN. The region spanning 590–751 is the Helicase ATP-binding domain; it reads RALEDNQFGG…WSCFDFVLPN (162 aa). ATP is bound at residue 603–610; it reads DEMGLGKT. Positions 702-705 match the DEAQ box motif; it reads DEAQ. One can recognise a Helicase C-terminal domain in the interval 868 to 1022; the sequence is ALNIIYEALE…EDVNFFKSLS (155 aa).

This sequence belongs to the SNF2/RAD54 helicase family.

This is an uncharacterized protein from Mycoplasma genitalium (strain ATCC 33530 / DSM 19775 / NCTC 10195 / G37) (Mycoplasmoides genitalium).